A 162-amino-acid polypeptide reads, in one-letter code: Peroxiredoxin-2C (162 aa).

In terms of domain architecture, Thioredoxin spans isoleucine 4 to leucine 162. The Cysteine sulfenic acid (-SOH) intermediate role is filled by cysteine 51.

This sequence belongs to the peroxiredoxin family. Prx5 subfamily. As to quaternary structure, monomer. Highly expressed in buds and flowers. Slightly expressed in green tissues. Also detected in pollen.

It is found in the cytoplasm. It catalyses the reaction [glutaredoxin]-dithiol + a hydroperoxide = [glutaredoxin]-disulfide + an alcohol + H2O. In terms of biological role, thiol-specific peroxidase that catalyzes the reduction of hydrogen peroxide and organic hydroperoxides to water and alcohols, respectively. Plays a role in cell protection against oxidative stress by detoxifying peroxides and as sensor of hydrogen peroxide-mediated signaling events. This Arabidopsis thaliana (Mouse-ear cress) protein is Peroxiredoxin-2C (PRXIIC).